A 508-amino-acid chain; its full sequence is N-acetyl-D-hexosamine oxidase (508 aa).

An FAD-binding PCMH-type domain is found at 26–203 (TDAQAAGRIA…TAYTFARLPE (178 aa)). The 6-(S-cysteinyl)-8alpha-(pros-histidyl)-FAD (His-Cys) cross-link spans 64–123 (HCYEDFVSNNPDGAIVDLSLLNAPEVRADGTVRIPAGTQNWNGYLELYKRHNLTLPGGSC).

Belongs to the oxygen-dependent FAD-linked oxidoreductase family. FAD serves as cofactor.

The enzyme catalyses N-acetyl-D-glucosamine + O2 + H2O = N-acetyl-D-glucosaminate + H2O2 + H(+). The catalysed reaction is N-acetyl-D-galactosamine + O2 + H2O = N-acetyl-D-galactosaminate + H2O2 + H(+). It carries out the reaction N-acetyl-D-glucosamine + O2 = N-acetyl-D-glucosamino-1,5-lactone + H2O2. It catalyses the reaction N-acetyl-D-galactosamine + O2 = N-acetyl-D-galactosamino-1,5-lactone + H2O2. Its function is as follows. Catalyzes the oxidation of a range of monosaccharides in vitro, displaying the highest activity with N-acetylglucosamine (GlcNAc) and N-acetylgalactosamine (GalNAc), with a reduction of O2 to H2O2. Acts upon the C1 carbon of the GlcNAc or GalNAc molecule, producing the corresponding lactone, which can spontaneously hydrolyze. Its biological function is unclear, but its main function might be connected to extracellular production of hydrogen peroxide to compete with other organisms through oxidative stress, or support the action of peroxidases and peroxygenases. The chain is N-acetyl-D-hexosamine oxidase from Ralstonia solanacearum (strain UW551).